The chain runs to 86 residues: MKTLLLTLVVVTIVCLDLGYTLTCLNCPEMFCGKFQTCRNGEKICFKKLQQRRPFSLRYIRGCAATCPGTKPRDMVECCSTDRCNR.

The N-terminal stretch at 1–21 is a signal peptide; the sequence is MKTLLLTLVVVTIVCLDLGYT. Disulfide bonds link Cys24–Cys45, Cys27–Cys32, Cys38–Cys63, Cys67–Cys78, and Cys79–Cys84.

It belongs to the three-finger toxin family. Ancestral subfamily. Orphan group II sub-subfamily. In terms of tissue distribution, expressed by the venom gland.

The protein resides in the secreted. In terms of biological role, binds with low affinity to muscular and very low affinity to neuronal (alpha-7/CHRNA7) nicotinic acetylcholine receptor (nAChR). The sequence is that of Weak neurotoxin 5 from Naja sputatrix (Malayan spitting cobra).